The following is a 768-amino-acid chain: Phosphoribosylformylglycinamidine synthase subunit PurL (768 aa).

Residue His48 is part of the active site. The ATP site is built by Tyr51 and Lys90. Glu92 contributes to the Mg(2+) binding site. Residues 93–96 (SHNH) and Arg115 each bind substrate. The Proton acceptor role is filled by His94. Residue Asp116 coordinates Mg(2+). Substrate is bound at residue Gln239. Asp267 is a binding site for Mg(2+). A substrate-binding site is contributed by 311 to 313 (ESQ). Positions 507 and 544 each coordinate ATP. Asn545 is a binding site for Mg(2+). Ser547 contacts substrate.

Belongs to the FGAMS family. As to quaternary structure, monomer. Part of the FGAM synthase complex composed of 1 PurL, 1 PurQ and 2 PurS subunits.

It localises to the cytoplasm. It catalyses the reaction N(2)-formyl-N(1)-(5-phospho-beta-D-ribosyl)glycinamide + L-glutamine + ATP + H2O = 2-formamido-N(1)-(5-O-phospho-beta-D-ribosyl)acetamidine + L-glutamate + ADP + phosphate + H(+). It participates in purine metabolism; IMP biosynthesis via de novo pathway; 5-amino-1-(5-phospho-D-ribosyl)imidazole from N(2)-formyl-N(1)-(5-phospho-D-ribosyl)glycinamide: step 1/2. In terms of biological role, part of the phosphoribosylformylglycinamidine synthase complex involved in the purines biosynthetic pathway. Catalyzes the ATP-dependent conversion of formylglycinamide ribonucleotide (FGAR) and glutamine to yield formylglycinamidine ribonucleotide (FGAM) and glutamate. The FGAM synthase complex is composed of three subunits. PurQ produces an ammonia molecule by converting glutamine to glutamate. PurL transfers the ammonia molecule to FGAR to form FGAM in an ATP-dependent manner. PurS interacts with PurQ and PurL and is thought to assist in the transfer of the ammonia molecule from PurQ to PurL. The sequence is that of Phosphoribosylformylglycinamidine synthase subunit PurL from Parasynechococcus marenigrum (strain WH8102).